We begin with the raw amino-acid sequence, 397 residues long: Xylose isomerase (397 aa).

Residues H54 and D57 contribute to the active site. Mg(2+) is bound by residues E181, E217, H220, D245, D255, D257, and D293.

Belongs to the xylose isomerase family. Homotetramer. The cofactor is Mg(2+).

Its subcellular location is the cytoplasm. The catalysed reaction is alpha-D-xylose = alpha-D-xylulofuranose. In Clavibacter sepedonicus (Clavibacter michiganensis subsp. sepedonicus), this protein is Xylose isomerase.